A 24-amino-acid chain; its full sequence is MAPRGFSCLLLLTSEIDLPVKRRA.

Residues 1 to 12 (MAPRGFSCLLLL) are sufficient to interact with BID and BIM and to suppress BID and BIM activity. Residues 3–19 (PRGFSCLLLLTSEIDLP) are sufficient for neuroprotective activity. Residues 5 to 12 (GFSCLLLL) form a sufficient to interact with MPP8 region. Required for secretion regions lie at residues 9–11 (LLL) and 19–20 (PV).

As to quaternary structure, homodimer. Interacts with amyloid-beta protein 42 (Abeta42); the interaction prevents Abeta42 fibril formation. Interacts with BAX; forms fibers with BAX which results in BAX conformational changes and sequestering of BAX into the fibers, preventing BAX activation. Interacts with both full-length BID and cleaved BID p15; forms fibers with BID which results in BID conformational changes and sequestering of BID into the fibers, preventing BID activation. Interacts with BIM isoform BimEL but not with BIM isoforms BimL or BimS; the interaction prevents BIM-induced apoptosis. Interacts with IGFBP3; competes with importin KPNB1 for binding to IGFBP3, blocking IGFBP3 nuclear import. Interacts with TRIM11. Interacts with MPP8. Expressed in testis, seminal plasma and sperm (at protein level). Higher seminal plasma levels are associated with normospermia than with oligospermia, asthenospermia or oligoasthenospermia (at protein level). Higher sperm levels are associated with normospermia than with asthenospermia (at protein level). Expressed in retinal epithelial cells (at protein level). Expressed in the heart, skeletal muscle, kidney and liver. Lesser but significant expression is observed in the brain and the gastrointestinal tract. Expressed in the AD brain, where it is found in some of the large intact neurons of the occipital lobes and small and round reactive glial cells in the hippocampus.

The protein localises to the secreted. It is found in the cytoplasm. Its subcellular location is the cell projection. It localises to the cilium. The protein resides in the flagellum. The protein localises to the nucleus. It is found in the mitochondrion. Functionally, plays a role as a neuroprotective factor. Protects against neuronal cell death induced by multiple different familial Alzheimer disease genes and amyloid-beta proteins in Alzheimer disease. Mediates its neuroprotective effect by interacting with a receptor complex composed of IL6ST/GP130, IL27RA/WSX1 and CNTFR. Also acts as a ligand for G-protein coupled receptors FPR2/FPRL1 and FPR3/FPRL2. Inhibits amyloid-beta protein 40 fibril formation. Also inhibits amyloid-beta protein 42 fibril formation. Suppresses apoptosis by binding to BAX and preventing the translocation of BAX from the cytosol to mitochondria. Also suppresses apoptosis by binding to BID and inhibiting the interaction of BID with BAX and BAK which prevents oligomerization of BAX and BAK and suppresses release of apoptogenic proteins from mitochondria. Forms fibers with BAX and also with BID, inducing BAX and BID conformational changes and sequestering them into the fibers which prevents their activation. Can also suppress apoptosis by interacting with BIM isoform BimEL, inhibiting BimEL-induced activation of BAX, blocking oligomerization of BAX and BAK, and preventing release of apoptogenic proteins from mitochondria. Plays a role in up-regulation of anti-apoptotic protein BIRC6/APOLLON, leading to inhibition of neuronal cell death. Binds to IGFBP3 and specifically blocks IGFBP3-induced cell death. Competes with importin KPNB1 for binding to IGFBP3 which is likely to block IGFBP3 nuclear import. Induces chemotaxis of mononuclear phagocytes via FPR2/FPRL1. Reduces aggregation and fibrillary formation by suppressing the effect of APP on mononuclear phagocytes and acts by competitively inhibiting the access of FPR2 to APP. Protects retinal pigment epithelium (RPE) cells against oxidative stress-induced and endoplasmic reticulum (ER) stress-induced apoptosis. Promotes mitochondrial biogenesis in RPE cells following oxidative stress and promotes STAT3 phosphorylation which leads to inhibition of CASP3 release. Also reduces CASP4 levels in RPE cells, suppresses ER stress-induced mitochondrial superoxide production and plays a role in up-regulation of mitochondrial glutathione. Reduces testicular hormone deprivation-induced apoptosis of germ cells at the nonandrogen-sensitive stages of the seminiferous epithelium cycle. Protects endothelial cells against free fatty acid-induced inflammation by suppressing oxidative stress, reducing expression of TXNIP and inhibiting activation of the NLRP3 inflammasome which inhibits expression of pro-inflammatory cytokines IL1B and IL18. Protects against high glucose-induced endothelial cell dysfunction by mediating activation of ERK5 which leads to increased expression of transcription factor KLF2 and prevents monocyte adhesion to endothelial cells. Inhibits the inflammatory response in astrocytes. Increases the expression of PPARGC1A/PGC1A in pancreatic beta cells which promotes mitochondrial biogenesis. Increases insulin sensitivity. The chain is Humanin from Homo sapiens (Human).